The primary structure comprises 301 residues: MEKMCSEFRPDGKRPQPVIGHVLVEALPYIRQFEGKTFVIKYGGAAMKDEVLKNIFAENVTLLRKVGIKVVIVHGGGDAITKTSDKMGLETTFVHGKRVTDLETINVVQMTLAGKVNQDIVQLINEDGGNAVGVSGLDADMIRAVPAANAETLGLVGQVAEINTRYIDLLTDAGLIPVIAPIGYDMESNVYNINADDAAAAIAVALKAEKLIYISDVEGVRVGDRILKTICKADAAEFIERGVITGGMIPKVVSAYQTLDGGVGKVHLIDGQITHALLLEVFTNEGVGTQFVVETEKEILS.

Residues 76–77 (GG), arginine 98, and asparagine 192 each bind substrate.

Belongs to the acetylglutamate kinase family. ArgB subfamily.

The protein localises to the cytoplasm. The enzyme catalyses N-acetyl-L-glutamate + ATP = N-acetyl-L-glutamyl 5-phosphate + ADP. It functions in the pathway amino-acid biosynthesis; L-arginine biosynthesis; N(2)-acetyl-L-ornithine from L-glutamate: step 2/4. Catalyzes the ATP-dependent phosphorylation of N-acetyl-L-glutamate. The protein is Acetylglutamate kinase of Chlorobaculum parvum (strain DSM 263 / NCIMB 8327) (Chlorobium vibrioforme subsp. thiosulfatophilum).